The chain runs to 262 residues: Nodulation protein J (262 aa).

In terms of domain architecture, ABC transmembrane type-2 spans 33-259 (ASILGNLAEP…FLSVGLLQRR (227 aa)). 6 consecutive transmembrane segments (helical) span residues 35 to 55 (ILGN…GLGA), 62 to 82 (GIPY…MISA), 125 to 145 (ALLA…ASWP), 147 to 167 (VLFA…LAMI), 177 to 197 (YFIF…GAVF), and 236 to 256 (LHIS…VGLL).

This sequence belongs to the ABC-2 integral membrane protein family. Lipooligosaccharide exporter (TC 3.A.1.102) subfamily. As to quaternary structure, the complex is composed of two ATP-binding proteins (NodI) and two transmembrane proteins (NodJ).

Its subcellular location is the cell inner membrane. Its function is as follows. Part of the ABC transporter complex NodIJ involved in the export of the nodulation factors (Nod factors), the bacterial signal molecules that induce symbiosis and subsequent nodulation induction. Nod factors are LCO (lipo-chitin oligosaccharide), a modified beta-1,4-linked N-acetylglucosamine oligosaccharide. This subunit encodes the transporter. This Sinorhizobium fredii (strain NBRC 101917 / NGR234) protein is Nodulation protein J (nodJ).